The sequence spans 348 residues: UDP-3-O-acylglucosamine N-acyltransferase (348 aa).

The Proton acceptor role is filled by H257.

Belongs to the transferase hexapeptide repeat family. LpxD subfamily. In terms of assembly, homotrimer.

The catalysed reaction is a UDP-3-O-[(3R)-3-hydroxyacyl]-alpha-D-glucosamine + a (3R)-hydroxyacyl-[ACP] = a UDP-2-N,3-O-bis[(3R)-3-hydroxyacyl]-alpha-D-glucosamine + holo-[ACP] + H(+). Its pathway is bacterial outer membrane biogenesis; LPS lipid A biosynthesis. In terms of biological role, catalyzes the N-acylation of UDP-3-O-acylglucosamine using 3-hydroxyacyl-ACP as the acyl donor. Is involved in the biosynthesis of lipid A, a phosphorylated glycolipid that anchors the lipopolysaccharide to the outer membrane of the cell. In Bartonella quintana (strain Toulouse) (Rochalimaea quintana), this protein is UDP-3-O-acylglucosamine N-acyltransferase.